A 208-amino-acid chain; its full sequence is Large ribosomal subunit protein uL3 (208 aa).

Gln-149 bears the N5-methylglutamine mark.

It belongs to the universal ribosomal protein uL3 family. As to quaternary structure, part of the 50S ribosomal subunit. Forms a cluster with proteins L14 and L19. Post-translationally, methylated by PrmB.

One of the primary rRNA binding proteins, it binds directly near the 3'-end of the 23S rRNA, where it nucleates assembly of the 50S subunit. The chain is Large ribosomal subunit protein uL3 from Haemophilus influenzae (strain PittGG).